A 161-amino-acid polypeptide reads, in one-letter code: Large ribosomal subunit protein uL15 (161 aa).

The disordered stretch occupies residues 1–43 (MKLSEIADNVGSRKKRMRIGRGIGSGKGKTGGRGGKGQTARSG). Residues 21 to 37 (RGIGSGKGKTGGRGGKG) are compositionally biased toward gly residues.

As to quaternary structure, part of the 50S ribosomal subunit.

In terms of biological role, binds to the 23S rRNA. This is Large ribosomal subunit protein uL15 from Rhodopseudomonas palustris (strain ATCC BAA-98 / CGA009).